A 287-amino-acid chain; its full sequence is Bifunctional protein FolD (287 aa).

NADP(+) is bound by residues Gly-160–Ser-162, Ser-189, and Thr-230.

The protein belongs to the tetrahydrofolate dehydrogenase/cyclohydrolase family. In terms of assembly, homodimer.

It carries out the reaction (6R)-5,10-methylene-5,6,7,8-tetrahydrofolate + NADP(+) = (6R)-5,10-methenyltetrahydrofolate + NADPH. The enzyme catalyses (6R)-5,10-methenyltetrahydrofolate + H2O = (6R)-10-formyltetrahydrofolate + H(+). Its pathway is one-carbon metabolism; tetrahydrofolate interconversion. Functionally, catalyzes the oxidation of 5,10-methylenetetrahydrofolate to 5,10-methenyltetrahydrofolate and then the hydrolysis of 5,10-methenyltetrahydrofolate to 10-formyltetrahydrofolate. The protein is Bifunctional protein FolD of Chlamydia caviae (strain ATCC VR-813 / DSM 19441 / 03DC25 / GPIC) (Chlamydophila caviae).